The primary structure comprises 117 residues: Immunoglobulin kappa variable 1-16 (117 aa).

The signal sequence occupies residues 1–22; it reads MDMRVLAQLLGLLLLCFPGARC. Positions 23-45 are framework-1; that stretch reads DIQMTQSPSSLSASVGDRVTITC. An Ig-like domain is found at 24–117; the sequence is IQMTQSPSSL…YYCQQYNSYP (94 aa). An intrachain disulfide couples Cys45 to Cys110. The complementarity-determining-1 stretch occupies residues 46–56; it reads RASQGISNYLA. A framework-2 region spans residues 57 to 71; that stretch reads WFQQKPGKAPKSLIY. Positions 72 to 78 are complementarity-determining-2; that stretch reads AASSLQS. The interval 79–110 is framework-3; that stretch reads GVPSKFSGSGSGTDFTLTISSLQPEDFATYYC. The complementarity-determining-3 stretch occupies residues 111–117; it reads QQYNSYP.

As to quaternary structure, immunoglobulins are composed of two identical heavy chains and two identical light chains; disulfide-linked.

Its subcellular location is the secreted. It localises to the cell membrane. V region of the variable domain of immunoglobulin light chains that participates in the antigen recognition. Immunoglobulins, also known as antibodies, are membrane-bound or secreted glycoproteins produced by B lymphocytes. In the recognition phase of humoral immunity, the membrane-bound immunoglobulins serve as receptors which, upon binding of a specific antigen, trigger the clonal expansion and differentiation of B lymphocytes into immunoglobulins-secreting plasma cells. Secreted immunoglobulins mediate the effector phase of humoral immunity, which results in the elimination of bound antigens. The antigen binding site is formed by the variable domain of one heavy chain, together with that of its associated light chain. Thus, each immunoglobulin has two antigen binding sites with remarkable affinity for a particular antigen. The variable domains are assembled by a process called V-(D)-J rearrangement and can then be subjected to somatic hypermutations which, after exposure to antigen and selection, allow affinity maturation for a particular antigen. The polypeptide is Immunoglobulin kappa variable 1-16 (Homo sapiens (Human)).